Reading from the N-terminus, the 774-residue chain is MDDWKSRLVIKSMLPHFAMVGNRQEPRKLQESGKKPSWMEEEDLSFLYKSSPGRKHQGTVKRRQEEDHFQFPDMADGGYPNKIKRPCLEDVTLAMGPGAHPSTACAELQVPPLTINPSPAAMGVAGQSLLLENNPMNGNIMGSPFVVPQTTEVGLKGPTVPYYEKINSVPAVDQELQELLEELTKIQDPSPNELDLEKILGTKPEEPLVLDHPQATLSTTPKPSVQMSHLESLASSKEFASSCSQVTGMSLQIPSSSTGISYSIPSTSKQIVSPSSSMAQSKSQVQAMLPVALPPLPVPQWHHAHQLKALAASKQGSATKQQGPTPSWSGLPPPGLSPPYRPVPSPHPPPLPLPPPPPPFSPQSLMVSCMSSNTLSGSTLRGSPNALLSSMTSSSNAALGPAMPYAPEKLPSPALTQQPQFGPQSSILANLMSSTIKTPQGHLMSALPASNPGPSPPYRPEKLSSPGLPQQSFTPQCSLIRSLTPTSNLLSQQQQQQQQQQQANVIFKPISSNSSKTLSMIMQQGMASSSPGATEPFTFGNTKPLSHFVSEPGPQKMPSMPTTSRQPSLLHYLQQPTPTQASSATASSTATATLQLQQQQQQQQQQPDHSSFLLQQMMQQPQRFQRSVASDSMPALPRQGCCHLFAWTSAASSVKPQHQHGNSFTSRQDPQPGDVSPSNITHVDKACKLGEARHPQVSLGRQPPSCQALGSESFLPGSSFAHELARVTSSYSTSEAAPWGSWDPKAWRQVPAPLLPSCDATARGTEIRSYGNDP.

Disordered stretches follow at residues 257–279 (STGI…SSMA), 310–365 (LAAS…PQSL), 386–421 (ALLS…QPQF), 442–473 (HLMS…QQSF), 525–609 (GMAS…QPDH), 656–678 (PQHQ…VSPS), and 755–774 (LPSC…GNDP). The segment covering 331-361 (LPPPGLSPPYRPVPSPHPPPLPLPPPPPPFS) has biased composition (pro residues). Residues 386–397 (ALLSSMTSSSNA) are compositionally biased toward polar residues. The segment covering 574–609 (QQPTPTQASSATASSTATATLQLQQQQQQQQQQPDH) has biased composition (low complexity). Positions 656–669 (PQHQHGNSFTSRQD) are enriched in polar residues. A Phosphoserine modification is found at Ser676.

It belongs to the mastermind family. As to expression, expressed in fetal brain, fetal ovary and fetal testis. Expressed in adult brain, ovary, skin, testis, uterus. Highly expressed in skeletal muscle.

The protein resides in the nucleus. In terms of biological role, transactivates the HES3 promoter independently of NOTCH proteins. HES3 is a non-canonical NOTCH target gene which lacks binding sites for RBPJ. The chain is Mastermind-like domain-containing protein 1 (MAMLD1) from Homo sapiens (Human).